Consider the following 460-residue polypeptide: MNVLNKEVFNQTKKVLGLIVSNKLVNGFSKQFKSYMFQSPKFKPIVSTDNDDKKMIYLCDTLKKETDIPDQLKTFIKENDIKVIEKDISLNYNNFSYEQVLKTLLPKDVGIPFSFERIGHIIHVNLKDEQLPFKYIIGQAILDKNIQVKTVLNKVGEIDTVFRTFKIEILAGEPDLVAEIKENECIFRFNFEEVYWNSRLQYEHMELVNTFKKEDIICDMFAGVGPFALPAAKIKKCKVYANDLNPSSVKYMKENAKTNRLESKVEISNLDARDFVKSLVEKSIPFTHVVMNLPSTSIEFLDVFRDIFLNSTIPPPIPPPIINCYTFTKLDESSDLIKDTIKNVENVIGAKVPSDYVCYEVRDVAPKKSMMRITFRMPTILPYVGSLTTASTTTTPTTSNTNTSTTTSTTSTSTTTTESTNTNNSANNVEDKNNKKRNSTEDSNETNETDSIDTNKKLKN.

S-adenosyl-L-methionine is bound by residues histidine 204, 243-244 (DL), 271-272 (DA), and asparagine 292. Low complexity predominate over residues 390–428 (ASTTTTPTTSNTNTSTTTSTTSTSTTTTESTNTNNSANN). The tract at residues 390–460 (ASTTTTPTTS…SIDTNKKLKN (71 aa)) is disordered. Positions 442-451 (DSNETNETDS) are enriched in acidic residues.

The protein belongs to the class I-like SAM-binding methyltransferase superfamily. TRM5/TYW2 family. As to quaternary structure, monomer.

Its subcellular location is the mitochondrion matrix. It localises to the nucleus. It is found in the cytoplasm. The enzyme catalyses guanosine(37) in tRNA + S-adenosyl-L-methionine = N(1)-methylguanosine(37) in tRNA + S-adenosyl-L-homocysteine + H(+). In terms of biological role, specifically methylates the N1 position of guanosine-37 in various cytoplasmic and mitochondrial tRNAs. Methylation is not dependent on the nature of the nucleoside 5' of the target nucleoside. This is the first step in the biosynthesis of wybutosine (yW), a modified base adjacent to the anticodon of tRNAs and required for accurate decoding. The polypeptide is tRNA (guanine(37)-N(1))-methyltransferase (trmt5) (Dictyostelium discoideum (Social amoeba)).